The chain runs to 425 residues: Multifunctional CCA protein (425 aa).

Residues glycine 8 and arginine 11 each coordinate ATP. CTP-binding residues include glycine 8 and arginine 11. Mg(2+) contacts are provided by aspartate 21 and aspartate 23. Arginine 91, arginine 141, and arginine 144 together coordinate ATP. Positions 91, 141, and 144 each coordinate CTP. Residues 230–331 (TGVHLMMVLD…VRLLERCDAI (102 aa)) enclose the HD domain.

This sequence belongs to the tRNA nucleotidyltransferase/poly(A) polymerase family. Bacterial CCA-adding enzyme type 1 subfamily. In terms of assembly, monomer. Can also form homodimers and oligomers. Requires Mg(2+) as cofactor. Ni(2+) is required as a cofactor.

It carries out the reaction a tRNA precursor + 2 CTP + ATP = a tRNA with a 3' CCA end + 3 diphosphate. It catalyses the reaction a tRNA with a 3' CCA end + 2 CTP + ATP = a tRNA with a 3' CCACCA end + 3 diphosphate. Catalyzes the addition and repair of the essential 3'-terminal CCA sequence in tRNAs without using a nucleic acid template. Adds these three nucleotides in the order of C, C, and A to the tRNA nucleotide-73, using CTP and ATP as substrates and producing inorganic pyrophosphate. tRNA 3'-terminal CCA addition is required both for tRNA processing and repair. Also involved in tRNA surveillance by mediating tandem CCA addition to generate a CCACCA at the 3' terminus of unstable tRNAs. While stable tRNAs receive only 3'-terminal CCA, unstable tRNAs are marked with CCACCA and rapidly degraded. The chain is Multifunctional CCA protein from Acidovorax sp. (strain JS42).